A 309-amino-acid polypeptide reads, in one-letter code: 2-phospho-L-lactate transferase (309 aa).

Residues Asp-50 and Lys-89 each contribute to the 7,8-didemethyl-8-hydroxy-5-deazariboflavin site.

The protein belongs to the CofD family. Homodimer. The cofactor is Mg(2+).

It catalyses the reaction (2S)-lactyl-2-diphospho-5'-guanosine + 7,8-didemethyl-8-hydroxy-5-deazariboflavin = oxidized coenzyme F420-0 + GMP + H(+). Its pathway is cofactor biosynthesis; coenzyme F420 biosynthesis. Catalyzes the transfer of the 2-phospholactate moiety from (2S)-lactyl-2-diphospho-5'-guanosine to 7,8-didemethyl-8-hydroxy-5-deazariboflavin (FO) with the formation of oxidized coenzyme F420-0 and GMP. This Methanococcus maripaludis (strain C7 / ATCC BAA-1331) protein is 2-phospho-L-lactate transferase.